A 151-amino-acid polypeptide reads, in one-letter code: Deoxyuridine 5'-triphosphate nucleotidohydrolase (151 aa).

Substrate contacts are provided by residues 70–72 (RSG), Asn-83, 87–89 (LID), and Lys-97.

It belongs to the dUTPase family. Mg(2+) is required as a cofactor.

The catalysed reaction is dUTP + H2O = dUMP + diphosphate + H(+). It participates in pyrimidine metabolism; dUMP biosynthesis; dUMP from dCTP (dUTP route): step 2/2. This enzyme is involved in nucleotide metabolism: it produces dUMP, the immediate precursor of thymidine nucleotides and it decreases the intracellular concentration of dUTP so that uracil cannot be incorporated into DNA. In Idiomarina loihiensis (strain ATCC BAA-735 / DSM 15497 / L2-TR), this protein is Deoxyuridine 5'-triphosphate nucleotidohydrolase.